Reading from the N-terminus, the 297-residue chain is Indole-3-glycerol phosphate synthase (297 aa).

This sequence belongs to the TrpC family.

The enzyme catalyses 1-(2-carboxyphenylamino)-1-deoxy-D-ribulose 5-phosphate + H(+) = (1S,2R)-1-C-(indol-3-yl)glycerol 3-phosphate + CO2 + H2O. It functions in the pathway amino-acid biosynthesis; L-tryptophan biosynthesis; L-tryptophan from chorismate: step 4/5. The sequence is that of Indole-3-glycerol phosphate synthase from Trichodesmium erythraeum (strain IMS101).